The sequence spans 342 residues: uncharacterized protein (342 aa).

Positions 3–173 (IAIRGGHNFL…LIGYLIAKGI (171 aa)) constitute a MurNAc-LAA domain.

The protein to C.perfringens CPE1502.

This is an uncharacterized protein from Clostridium perfringens.